Here is a 175-residue protein sequence, read N- to C-terminus: MSPCAVVVGPPGAGKTTVGRLLAERLGVAFRDTDDDVVRVAGKPIAEIFTGDGEPVFRAMEERAVAAALAEHDGVLSLGGGSVLSERTRALLAEQPVVFLSVGLAEGARRTGLSTARPLLAGVNPRATFKALLDARLPLYREVATWELATDGVEPDALVDRIVERVTADRAAGRE.

ATP is bound at residue 12–17; the sequence is GAGKTT. T16 is a Mg(2+) binding site. Residues D34, R58, and G80 each coordinate substrate. Residue R117 coordinates ATP. R136 provides a ligand contact to substrate.

This sequence belongs to the shikimate kinase family. As to quaternary structure, monomer. The cofactor is Mg(2+).

It is found in the cytoplasm. It catalyses the reaction shikimate + ATP = 3-phosphoshikimate + ADP + H(+). It participates in metabolic intermediate biosynthesis; chorismate biosynthesis; chorismate from D-erythrose 4-phosphate and phosphoenolpyruvate: step 5/7. Its function is as follows. Catalyzes the specific phosphorylation of the 3-hydroxyl group of shikimic acid using ATP as a cosubstrate. This Saccharopolyspora erythraea (strain ATCC 11635 / DSM 40517 / JCM 4748 / NBRC 13426 / NCIMB 8594 / NRRL 2338) protein is Shikimate kinase.